The following is a 200-amino-acid chain: ADP-ribosylation factor-like protein 4D (200 aa).

Gly-2 carries the N-myristoyl glycine lipid modification. Residues 27 to 34, 75 to 79, and 134 to 137 each bind GTP; these read GLDSAGKT, DVGGQ, and NKQD.

This sequence belongs to the small GTPase superfamily. Arf family. In terms of assembly, interacts with CYTH2; the interaction is direct and ARL4D GTP-dependent. Does not interact with ARL4D.

The protein localises to the nucleus. It is found in the nucleolus. It localises to the cell membrane. Its subcellular location is the cytoplasm. Functionally, small GTP-binding protein which cycles between an inactive GDP-bound and an active GTP-bound form, and the rate of cycling is regulated by guanine nucleotide exchange factors (GEF) and GTPase-activating proteins (GAP). GTP-binding protein that does not act as an allosteric activator of the cholera toxin catalytic subunit. Recruits CYTH1, CYTH2, CYTH3 and CYTH4 to the plasma membrane in GDP-bound form. This Bos taurus (Bovine) protein is ADP-ribosylation factor-like protein 4D (ARL4D).